The following is a 57-amino-acid chain: Lantibiotic nukacin (57 aa).

The propeptide occupies 1 to 30 (MENSKVMKDIEVANLLEEVQEDELNEVLGA). Positions 39–44 (TVSHDC) form a cross-link, beta-methyllanthionine (Thr-Cys). 2 consecutive cross-links (lanthionine (Ser-Cys)) follow at residues 41 to 55 (SHDC…VFTC) and 48 to 56 (SFQFVFTCC). Thr-54 carries the post-translational modification 2,3-didehydrobutyrine.

Maturation of lantibiotics involves the enzymatic conversion of Thr, and Ser into dehydrated AA and the formation of thioether bonds with cysteine. This is followed by membrane translocation and cleavage of the modified precursor.

It is found in the secreted. Functionally, lanthionine-containing peptide antibiotic (lantibiotic) active on Gram-positive bacteria. The bactericidal activity of lantibiotics is based on depolarization of energized bacterial cytoplasmic membranes, initiated by the formation of aqueous transmembrane pores. This chain is Lantibiotic nukacin, found in Staphylococcus simulans.